Consider the following 509-residue polypeptide: Protein root UVB sensitive 5 (509 aa).

Residues 22 to 49 (CQPKRRRVEHLRCSAQPSSIREDDEDAD) are disordered.

The protein belongs to the RUS1 family.

This is Protein root UVB sensitive 5 from Arabidopsis thaliana (Mouse-ear cress).